A 504-amino-acid chain; its full sequence is Arabinose import ATP-binding protein AraG (504 aa).

2 ABC transporter domains span residues 8 to 243 (LSFR…MVGR) and 256 to 499 (YGEE…MPKV). Position 40–47 (40–47 (GENGAGKS)) interacts with ATP.

The protein belongs to the ABC transporter superfamily. Arabinose importer (TC 3.A.1.2.2) family. The complex is composed of two ATP-binding proteins (AraG), two transmembrane proteins (AraH) and a solute-binding protein (AraF).

It localises to the cell inner membrane. It carries out the reaction L-arabinose(out) + ATP + H2O = L-arabinose(in) + ADP + phosphate + H(+). Functionally, part of the ABC transporter complex AraFGH involved in arabinose import. Responsible for energy coupling to the transport system. This is Arabinose import ATP-binding protein AraG from Escherichia coli O157:H7.